Here is a 534-residue protein sequence, read N- to C-terminus: Calcium-dependent protein kinase 18 (534 aa).

Residues 1-49 (MGLCFSSPKATRRGTGSRNPNPDSPTQGKASEKVSNKNKKNTKKIQLRH) form a disordered region. Residue Gly-2 is the site of N-myristoyl glycine attachment. Residues 14 to 29 (GTGSRNPNPDSPTQGK) show a composition bias toward polar residues. The segment covering 36 to 47 (NKNKKNTKKIQL) has biased composition (basic residues). The Protein kinase domain occupies 71 to 331 (YTIGKLLGHG…AAQALSHSWV (261 aa)). Residues 77–85 (LGHGQFGFT) and Lys-100 contribute to the ATP site. The Proton acceptor role is filled by Asp-197. Position 237 is a phosphoserine (Ser-237). An autoinhibitory domain region spans residues 337 to 367 (ASEVPIDISVLNNMRQFVKFSRLKQIALRAL). EF-hand domains follow at residues 374 to 409 (DELD…DVPW), 411 to 446 (LKDA…VNQL), 453 to 488 (KWQQ…KGSI), and 491 to 518 (LLEE…ASLK). Ca(2+)-binding residues include Asp-387, Asp-389, Asn-391, Ser-393, Glu-398, Asp-424, Asn-426, Asp-428, Glu-435, Asp-466, Asp-468, Asp-470, Glu-477, Asp-496, Asp-498, Asp-500, and Arg-502. At Ser-504 the chain carries Phosphoserine. Residue Glu-507 coordinates Ca(2+).

This sequence belongs to the protein kinase superfamily. Ser/Thr protein kinase family. CDPK subfamily.

It localises to the membrane. It catalyses the reaction L-seryl-[protein] + ATP = O-phospho-L-seryl-[protein] + ADP + H(+). It carries out the reaction L-threonyl-[protein] + ATP = O-phospho-L-threonyl-[protein] + ADP + H(+). Activated by calcium. Autophosphorylation may play an important role in the regulation of the kinase activity. Its function is as follows. May play a role in signal transduction pathways that involve calcium as a second messenger. This Arabidopsis thaliana (Mouse-ear cress) protein is Calcium-dependent protein kinase 18 (CPK18).